The following is a 175-amino-acid chain: Sec-independent protein translocase protein TatB (175 aa).

The helical transmembrane segment at 1–21 threads the bilayer; sequence MLDLGLSKMALIGVVALVVLG. Positions 94–115 are enriched in low complexity; it reads SAVSPGGSAAADAPDGPSAASG. Disordered regions lie at residues 94–118 and 153–175; these read SAVSPGGSAAADAPDGPSAASGEPS and VQSGAARVARHRPASLRRPARFL. The span at 160–175 shows a compositional bias: basic residues; it reads VARHRPASLRRPARFL.

This sequence belongs to the TatB family. As to quaternary structure, the Tat system comprises two distinct complexes: a TatABC complex, containing multiple copies of TatA, TatB and TatC subunits, and a separate TatA complex, containing only TatA subunits. Substrates initially bind to the TatABC complex, which probably triggers association of the separate TatA complex to form the active translocon.

It is found in the cell inner membrane. Functionally, part of the twin-arginine translocation (Tat) system that transports large folded proteins containing a characteristic twin-arginine motif in their signal peptide across membranes. Together with TatC, TatB is part of a receptor directly interacting with Tat signal peptides. TatB may form an oligomeric binding site that transiently accommodates folded Tat precursor proteins before their translocation. This chain is Sec-independent protein translocase protein TatB, found in Burkholderia pseudomallei (strain 1106a).